Here is a 387-residue protein sequence, read N- to C-terminus: Alkanesulfonate monooxygenase (387 aa).

The protein belongs to the SsuD family.

The enzyme catalyses an alkanesulfonate + FMNH2 + O2 = an aldehyde + FMN + sulfite + H2O + 2 H(+). Functionally, catalyzes the desulfonation of aliphatic sulfonates. This Xanthomonas axonopodis pv. citri (strain 306) protein is Alkanesulfonate monooxygenase.